The chain runs to 183 residues: Capsid protein (183 aa).

A disordered region spans residues 136-183 (NAPILSTLPETTVVRRRGRSPRRRTPSPRRRRSQSPRRRRSQSRESQC). A compositionally biased stretch (basic residues) spans 149–176 (VRRRGRSPRRRTPSPRRRRSQSPRRRRS). Phosphoserine; by host is present on residues Ser-155, Ser-162, and Ser-170. The 1; half-length repeat unit spans residues 155–161 (SPRRRTP). Positions 155 to 177 (SPRRRTPSPRRRRSQSPRRRRSQ) are 3 X 8 AA repeats of S-P-R-R-R-[PR]-S-Q. The short motif at 158-175 (RRTPSPRRRRSQSPRRRR) is the Bipartite nuclear localization signal element. Tandem repeats lie at residues 162 to 169 (SPRRRRSQ) and 170 to 177 (SPRRRRSQ). Residues 177-183 (QSRESQC) form an RNA binding region.

Belongs to the orthohepadnavirus core antigen family. In terms of assembly, homodimerizes, then multimerizes. Interacts with cytosol exposed regions of viral L glycoprotein present in the reticulum-to-Golgi compartment. Interacts with human FLNB. Phosphorylated form interacts with host importin alpha; this interaction depends on the exposure of the NLS, which itself depends upon genome maturation and/or phosphorylation of the capsid protein. Interacts with host NUP153. In terms of processing, phosphorylated by host SRPK1, SRPK2, and maybe protein kinase C or GAPDH. Phosphorylation is critical for pregenomic RNA packaging. Protein kinase C phosphorylation is stimulated by HBx protein and may play a role in transport of the viral genome to the nucleus at the late step during the viral replication cycle.

It localises to the virion. The protein resides in the host cytoplasm. Its function is as follows. Self assembles to form an icosahedral capsid. Most capsids appear to be large particles with an icosahedral symmetry of T=4 and consist of 240 copies of capsid protein, though a fraction forms smaller T=3 particles consisting of 180 capsid proteins. Entering capsids are transported along microtubules to the nucleus. Phosphorylation of the capsid is thought to induce exposure of nuclear localization signal in the C-terminal portion of the capsid protein that allows binding to the nuclear pore complex via the importin (karyopherin-) alpha and beta. Capsids are imported in intact form through the nuclear pore into the nuclear basket, where it probably binds NUP153. Only capsids that contain the mature viral genome can release the viral DNA and capsid protein into the nucleoplasm. Immature capsids get stuck in the basket. Capsids encapsulate the pre-genomic RNA and the P protein. Pre-genomic RNA is reverse-transcribed into DNA while the capsid is still in the cytoplasm. The capsid can then either be directed to the nucleus, providing more genomes for transcription, or bud through the endoplasmic reticulum to provide new virions. The polypeptide is Capsid protein (Homo sapiens (Human)).